The chain runs to 1181 residues: Cellulose synthase-like protein D5 (1181 aa).

Residues 1–17 (MVKSAASQSPSPVTITV) are compositionally biased toward polar residues. Disordered regions lie at residues 1–70 (MVKS…DEGR) and 202–229 (KEPY…LPQM). Positions 48 to 59 (SSRATRRTSISS) are enriched in low complexity. The segment covering 210–222 (DDPETEEEDEEDE) has biased composition (acidic residues). Transmembrane regions (helical) follow at residues 312-332 (AIIS…GLFL) and 343-363 (AMWL…SWLL). Residue Asp443 is part of the active site. A coiled-coil region spans residues 497 to 542 (VRERRRVKREYDEFKVRINSLPEAIRRRSDAYNVHEELRAKKKQME). Asp884 is an active-site residue. 6 helical membrane passes run 966–986 (LFLI…QFIV), 991–1011 (ITFL…SLLE), 1038–1058 (PAAV…SFTL), 1082–1102 (FLMV…AVGL), 1116–1136 (LVGG…FAKG), and 1146–1166 (TIVF…WVYI).

This sequence belongs to the glycosyltransferase 2 family. Plant cellulose synthase-like D subfamily. As to expression, expressed in vascular tissues.

The protein resides in the golgi apparatus membrane. Functionally, involved in stem and root growth. Possesses xylan and homogalacturonan synthase activity. This is Cellulose synthase-like protein D5 (CSLD5) from Arabidopsis thaliana (Mouse-ear cress).